Here is a 409-residue protein sequence, read N- to C-terminus: POU domain, class 4, transcription factor 2 (409 aa).

The disordered stretch occupies residues 26 to 93; it reads YSALHSTSPG…SEAMRRACLP (68 aa). Residues 31–52 show a composition bias toward low complexity; it reads STSPGSSAPIAPSASSPSSSSN. Residues 53–69 are compositionally biased toward gly residues; the sequence is AGGGGGGGGGGGGGGGR. Residues 91 to 237 form a required for transcriptional activation region; sequence CLPTPPSNIF…MHQAALSMAH (147 aa). Residues 110-119 carry the POU-IV box motif; the sequence is RAEALAAVDI. The span at 153-166 shows a compositional bias: low complexity; sequence AASSSSVPISHPSA. The interval 153-188 is disordered; sequence AASSSSVPISHPSALAGTHHHHHHHHHHHHQPHQAL. Residues 170–184 are compositionally biased toward basic residues; it reads THHHHHHHHHHHHQP. The short motif at 171–185 is the Nuclear speckle targeting signal element; that stretch reads HHHHHHHHHHHHQPH. A required for DNA-binding and transcriptional repression region spans residues 238-409; sequence AHGLPSHMGC…QKRMKYSAGI (172 aa). The 78-residue stretch at 250–327 folds into the POU-specific domain; sequence DVDADPRDLE…ILQAWLEEAE (78 aa). A DNA-binding region (homeobox) is located at residues 345–404; the sequence is KKRKRTSIAAPEKRSLEAYFAIQPRPSSEKIAAIAEKLDLKKNVVRVWFCNQRQKQKRMK.

It belongs to the POU transcription factor family. Class-4 subfamily. As to quaternary structure, interacts with POU4F1; this interaction inhibits both POU4F1 DNA-binding and transcriptional activities. Interacts (C-terminus) with ESR1 (via DNA-binding domain); this interaction increases the estrogen receptor ESR1 transcriptional activity in a DNA- and ligand 17-beta-estradiol-independent manner. Interacts (via C-terminus) with TP53 (via N-terminus). Interacts with DLX1 (via homeobox DNA-binding domain); this interaction suppresses DLX1-mediated transcriptional activity in postnatal retina enhancing retinal ganglion cell (RGC) differentiation. Interacts with DLX2 (via homeobox DNA-binding domain); this interaction enhances RGC differentiation. Interacts (via C-terminus) with ISL1 (via C-terminus). Interacts with ISL2. Interacts with LHX2. In terms of tissue distribution, expressed in the brain. Expressed in the ganglion cell layer of the retina.

It localises to the nucleus. The protein localises to the nucleus speckle. The protein resides in the cytoplasm. Tissue-specific DNA-binding transcription factor involved in the development and differentiation of target cells. Functions either as activator or repressor modulating the rate of target gene transcription through RNA polymerase II enzyme in a promoter-dependent manner. Binds to the consensus octamer motif 5'-AT[A/T]A[T/A]T[A/T]A-3' of promoter of target genes. Plays a fundamental role in the gene regulatory network essential for retinal ganglion cell (RGC) differentiation. Binds to an octamer site to form a ternary complex with ISL1; cooperates positively with ISL1 and ISL2 to potentiate transcriptional activation of RGC target genes being involved in RGC fate commitment in the developing retina and RGC axon formation and pathfinding. Inhibits DLX1 and DLX2 transcriptional activities preventing DLX1- and DLX2-mediated ability to promote amacrine cell fate specification. In cooperation with TP53 potentiates transcriptional activation of BAX promoter activity increasing neuronal cell apoptosis. Negatively regulates BAX promoter activity in the absence of TP53. Acts as a transcriptional coactivator via its interaction with the transcription factor ESR1 by enhancing its effect on estrogen response element (ERE)-containing promoter. Antagonizes the transcriptional stimulatory activity of POU4F1 by preventing its binding to an octamer motif. Involved in TNFSF11-mediated terminal osteoclast differentiation. The chain is POU domain, class 4, transcription factor 2 from Homo sapiens (Human).